Reading from the N-terminus, the 100-residue chain is Small ribosomal subunit protein uS14c (100 aa).

This sequence belongs to the universal ribosomal protein uS14 family. In terms of assembly, part of the 30S ribosomal subunit.

Its subcellular location is the plastid. Binds 16S rRNA, required for the assembly of 30S particles. In Cuscuta exaltata (Tall dodder), this protein is Small ribosomal subunit protein uS14c.